Reading from the N-terminus, the 111-residue chain is uncharacterized protein (111 aa).

This is an uncharacterized protein from Acanthamoeba polyphaga mimivirus (APMV).